A 95-amino-acid polypeptide reads, in one-letter code: UPF0473 protein CD630_12860 (95 aa).

Belongs to the UPF0473 family.

This chain is UPF0473 protein CD630_12860, found in Clostridioides difficile (strain 630) (Peptoclostridium difficile).